The primary structure comprises 312 residues: MEIIFYHQTFDTPFWIRELEKQLPGARVREWKAGDNQPADYALVWHPPVEMLQGRALKAVFALGAGVDSILSKLRDHPDMLPLSIPLFRLEDTGMGRQMQEYAVSQVLHWFRRFDDYQALKLASRWQPLPEYRADEFTVGIMGAGVLGAKVAESLQPWGFPLRVWSRSRKSWPQVQSFAGQAELGEFLQGTRVLINLLPNTAETAGIINQTLLAQLPDESYVLNLARGVHVVEEDLLAALNSGKLKGAMLDVFSREPLPQESPLWAHPRVAMTPHVAAVTRPMEAITYIAETISRLERGEPVSGQVDRQRGY.

The active site involves Arg227. Catalysis depends on His275, which acts as the Proton donor.

The protein belongs to the D-isomer specific 2-hydroxyacid dehydrogenase family. GhrA subfamily.

It is found in the cytoplasm. It carries out the reaction glycolate + NADP(+) = glyoxylate + NADPH + H(+). The catalysed reaction is (R)-glycerate + NAD(+) = 3-hydroxypyruvate + NADH + H(+). It catalyses the reaction (R)-glycerate + NADP(+) = 3-hydroxypyruvate + NADPH + H(+). In terms of biological role, catalyzes the NADPH-dependent reduction of glyoxylate and hydroxypyruvate into glycolate and glycerate, respectively. The chain is Glyoxylate/hydroxypyruvate reductase A from Klebsiella pneumoniae (strain 342).